We begin with the raw amino-acid sequence, 177 residues long: Large ribosomal subunit protein uL6 (177 aa).

Belongs to the universal ribosomal protein uL6 family. As to quaternary structure, part of the 50S ribosomal subunit.

Functionally, this protein binds to the 23S rRNA, and is important in its secondary structure. It is located near the subunit interface in the base of the L7/L12 stalk, and near the tRNA binding site of the peptidyltransferase center. This is Large ribosomal subunit protein uL6 from Methylococcus capsulatus (strain ATCC 33009 / NCIMB 11132 / Bath).